The chain runs to 489 residues: E3 ubiquitin-protein ligase RGLG1 (489 aa).

Residues 1–10 (MGGGNSKEES) show a composition bias toward basic and acidic residues. The segment at 1-125 (MGGGNSKEES…SQSQVADRKK (125 aa)) is disordered. A lipid anchor (N-myristoyl glycine) is attached at G2. Low complexity predominate over residues 11-23 (SSPSSSSWASHQS). Over residues 34-57 (YPPPPTYAPAPSPAPAPAPVPAPS) the composition is skewed to pro residues. Over residues 58 to 75 (PASSYGPQYSQEGYASQP) the composition is skewed to low complexity. Over residues 76 to 88 (NNPPPPTYAPAPS) the composition is skewed to pro residues. Residues 156 to 376 (NLIVGIDFTK…KETEFALSAL (221 aa)) enclose the VWFA domain. The RING-type zinc finger occupies 446-479 (CPICLSNPKNMAFGCGHQTCCECGPDLKVCPICR).

As to quaternary structure, interacts with the heterodimer UBC35/UEV1B. Interacts with ERF053. Interacts with PP2CA. In terms of processing, N-myristoylated. In terms of tissue distribution, ubiquitously expressed.

It localises to the cell membrane. It is found in the nucleus. The catalysed reaction is S-ubiquitinyl-[E2 ubiquitin-conjugating enzyme]-L-cysteine + [acceptor protein]-L-lysine = [E2 ubiquitin-conjugating enzyme]-L-cysteine + N(6)-ubiquitinyl-[acceptor protein]-L-lysine.. Its function is as follows. E3 ubiquitin-protein ligase that mediates the formation of 'Lys-63'-linked ubiquitin chains. Regulates apical dominance by acting on the auxin transport proteins abundance. Together with RGLG5, mediates the ubiquitination and subsequent proteasomal degradation of the target protein PP2CA. Functions as a positive regulator of abscisic acid (ABA) signaling through ABA-dependent degradation of PP2CA, a major inhibitor of ABA signaling. Acts as a negative regulator of drought stress response. The chain is E3 ubiquitin-protein ligase RGLG1 from Arabidopsis thaliana (Mouse-ear cress).